A 260-amino-acid chain; its full sequence is Thiazole synthase (260 aa).

Lys102 serves as the catalytic Schiff-base intermediate with DXP. 1-deoxy-D-xylulose 5-phosphate-binding positions include Gly163, 189–190, and 211–212; these read AG and NT.

The protein belongs to the ThiG family. In terms of assembly, homotetramer. Forms heterodimers with either ThiH or ThiS.

It localises to the cytoplasm. It catalyses the reaction [ThiS sulfur-carrier protein]-C-terminal-Gly-aminoethanethioate + 2-iminoacetate + 1-deoxy-D-xylulose 5-phosphate = [ThiS sulfur-carrier protein]-C-terminal Gly-Gly + 2-[(2R,5Z)-2-carboxy-4-methylthiazol-5(2H)-ylidene]ethyl phosphate + 2 H2O + H(+). The protein operates within cofactor biosynthesis; thiamine diphosphate biosynthesis. Its function is as follows. Catalyzes the rearrangement of 1-deoxy-D-xylulose 5-phosphate (DXP) to produce the thiazole phosphate moiety of thiamine. Sulfur is provided by the thiocarboxylate moiety of the carrier protein ThiS. In vitro, sulfur can be provided by H(2)S. The protein is Thiazole synthase of Geobacter metallireducens (strain ATCC 53774 / DSM 7210 / GS-15).